Reading from the N-terminus, the 392-residue chain is Cyclic AMP receptor 1 (392 aa).

Over 1 to 13 (MGLLDGNPANETS) the chain is Extracellular. N-linked (GlcNAc...) asparagine glycosylation occurs at Asn-10. A helical membrane pass occupies residues 14–33 (LVLLLFADFSSMLGCMAVLI). Residues 34–47 (GFWRLKLLRNHVTK) are Cytoplasmic-facing. Residues 48 to 68 (VIACFCATSFCKDFPSTILTL) traverse the membrane as a helical segment. Residues 69–83 (TNTAVNGGFPCYLYA) lie on the Extracellular side of the membrane. A helical membrane pass occupies residues 84–109 (IVITYGSFACWLWTLCLAISIYMLIV). At 110 to 120 (KREPEPERFEK) the chain is on the cytoplasmic side. The chain crosses the membrane as a helical span at residues 121–139 (YYYLLCWGLPLISTIVMLA). At 140-162 (KNTVQFVGNWCWIGVSFTGYRFG) the chain is on the extracellular side. Residues 163–181 (LFYGPFLFIWAISAVLVGL) traverse the membrane as a helical segment. The Cytoplasmic portion of the chain corresponds to 182 to 205 (TSRYTYVVIHNGVSDNKEKHLTYQ). A helical transmembrane segment spans residues 206 to 224 (FKLINYIIVFLVCWVFAVV). Residues 225-235 (NRIVNGLNMFP) lie on the Extracellular side of the membrane. A helical transmembrane segment spans residues 236-260 (PALNILHTYLSVSHGFWASVTFIYN). The Cytoplasmic segment spans residues 261–392 (NPLMWRYFGA…STSTNGQGNN (132 aa)). Disordered regions lie at residues 292–324 (NKNNNNPSPYSSSRGTSGKTMGGHPTGDDVQCS) and 339–392 (VNNQ…QGNN). Polar residues predominate over residues 298–310 (PSPYSSSRGTSGK). Phosphoserine is present on residues Ser-299, Ser-302, Ser-303, Ser-304, Ser-308, Ser-360, Ser-361, Ser-362, Ser-363, Ser-364, Ser-366, Ser-367, and Ser-368. A compositionally biased stretch (low complexity) spans 340–367 (NNQQNLNNNYGLQQNYNDEGSSSSSLSS). Polar residues predominate over residues 375–392 (VEMQNIQISTSTNGQGNN).

It belongs to the G-protein coupled receptor 5 family. In terms of processing, C-terminal Ser or Thr residues may be phosphorylated.

It localises to the membrane. Functionally, receptor for cAMP. Coordinates the aggregation of individual cells into a multicellular organism and regulates the expression of a large number of developmentally regulated genes. The activity of this receptor is mediated by G proteins. The chain is Cyclic AMP receptor 1 (carA-1) from Dictyostelium discoideum (Social amoeba).